Consider the following 1169-residue polypeptide: Rabankyrin-5 (1169 aa).

N-acetylalanine is present on A2. Residues 68-130 (SDLKIKVGDR…IYTDELEFRE (63 aa)) form the BTB domain. ANK repeat units follow at residues 217 to 247 (KTEY…QLPG), 255 to 284 (NGDL…DVDM), 288 to 317 (SGWS…FVNA), 322 to 362 (AQET…NPNM), and 366 to 396 (KGRT…DLEL). S270 bears the Phosphoserine mark. Residues 421–423 (NPF) carry the NPF motif. 16 ANK repeats span residues 490-519 (WGET…NPNL), 542-572 (HLQT…ALHA), 588-617 (RDQT…AIND), 621-650 (DGQT…DINV), 654-683 (DGET…DMSV), 687-716 (KGNP…DATC), 724-753 (CLQT…DVNS), 769-798 (DGQT…NVNA), 802-832 (EGRT…HLNV), 836-865 (QGLT…GAAE), 870-899 (KGRN…NVNS), 905-934 (SKLT…KVNE), 938-967 (HRQT…DFAA), 971-1001 (NGNN…DAEA), 1005-1037 (RGQS…GYPL), and 1043-1072 (DGST…RLGV). Residues 650–759 (VRTQDGETAL…DVNSPRQPGA (110 aa)) are interaction with RHOD and RAB5A. An FYVE-type zinc finger spans residues 1104 to 1164 (WCDGSYCYEC…VCNICFDVLT (61 aa)). Zn(2+)-binding residues include C1110, C1113, C1126, C1129, C1134, C1137, C1156, and C1159.

In terms of assembly, interacts with RAB5A (in GTP-bound form). Interacts with RHOD (independent of GTP-loaded status). Interacts with EHD1. Interacts with VPS26A; the interaction is independent of EHD1 and is indicative for an association with the cargo recognition subcomplex of the retromer complex. In terms of tissue distribution, high expression in whole adult brain and intermediate expression in all other tissues and specific brain regions examined, including fetal brain.

The protein localises to the cytoplasm. It is found in the endosome membrane. The protein resides in the early endosome. In terms of biological role, proposed effector of Rab5. Binds to phosphatidylinositol 3-phosphate (PI(3)P). Involved in homotypic early endosome fusion and to a lesser extent in heterotypic fusion of chlathrin-coated vesicles with early endosomes. Involved in macropinocytosis; the function is dependent on Rab5-GTP. Required for correct endosomal localization. Involved in the internalization and trafficking of activated tyrosine kinase receptors such as PDGFRB. Regulates the subcellular localization of the retromer complex in a EHD1-dependent manner. Involved in endosome-to-Golgi transport and biosynthetic transport to late endosomes and lysosomes indicative for a regulation of retromer complex-mediated retrograde transport. This Homo sapiens (Human) protein is Rabankyrin-5 (ANKFY1).